We begin with the raw amino-acid sequence, 690 residues long: Protein arginine N-methyltransferase 7 (690 aa).

SAM-dependent MTase PRMT-type domains are found at residues 14-357 and 366-690; these read QNSW…YSLW and TKSV…QKKL.

The protein belongs to the class I-like SAM-binding methyltransferase superfamily. Protein arginine N-methyltransferase family. PRMT7 subfamily. Expressed at low level in ovary.

Its function is as follows. Essential arginine methyltransferase that can both catalyze the formation of omega-N monomethylarginine (MMA) and symmetrical dimethylarginine (sDMA). Specifically mediates the symmetrical dimethylation of arginine residues in the small nuclear ribonucleoproteins SmD1 and SmD3. This is Protein arginine N-methyltransferase 7 (Art7) from Drosophila melanogaster (Fruit fly).